Reading from the N-terminus, the 153-residue chain is uncharacterized protein (153 aa).

A signal peptide spans 1–21; the sequence is MKITITSLLFFLVMIVELASA.

This is an uncharacterized protein from Saccharomyces cerevisiae (strain ATCC 204508 / S288c) (Baker's yeast).